A 640-amino-acid polypeptide reads, in one-letter code: 1-deoxy-D-xylulose-5-phosphate synthase (640 aa).

Thiamine diphosphate is bound by residues H77 and 118 to 120 (AHA). D149 contacts Mg(2+). Thiamine diphosphate-binding positions include 150–151 (GS), N178, Y287, and E369. N178 is a binding site for Mg(2+).

The protein belongs to the transketolase family. DXPS subfamily. In terms of assembly, homodimer. The cofactor is Mg(2+). It depends on thiamine diphosphate as a cofactor.

It carries out the reaction D-glyceraldehyde 3-phosphate + pyruvate + H(+) = 1-deoxy-D-xylulose 5-phosphate + CO2. The protein operates within metabolic intermediate biosynthesis; 1-deoxy-D-xylulose 5-phosphate biosynthesis; 1-deoxy-D-xylulose 5-phosphate from D-glyceraldehyde 3-phosphate and pyruvate: step 1/1. Its function is as follows. Catalyzes the acyloin condensation reaction between C atoms 2 and 3 of pyruvate and glyceraldehyde 3-phosphate to yield 1-deoxy-D-xylulose-5-phosphate (DXP). The polypeptide is 1-deoxy-D-xylulose-5-phosphate synthase (Caulobacter vibrioides (strain NA1000 / CB15N) (Caulobacter crescentus)).